The chain runs to 1411 residues: Tectonin beta-propeller repeat-containing protein 2 (1411 aa).

WD repeat units follow at residues 23 to 66, 67 to 114, 115 to 161, 162 to 203, 204 to 265, 266 to 309, and 310 to 343; these read IPTK…HLNQ, MRKY…PGRN, KQLR…LDQG, LCNS…EKSV, RQIG…AGGV, KPFE…EYSI, and YLLD…FFLK. 4 disordered regions span residues 379 to 439, 463 to 542, 579 to 637, and 758 to 779; these read QAEK…GSQP, VKRK…QENT, RELL…GPQS, and YAHG…PSCS. The span at 400–420 shows a compositional bias: low complexity; sequence SSVASEPRSRSSSLNSTDSGS. Polar residues-rich tracts occupy residues 475 to 489, 496 to 542, 608 to 621, and 763 to 779; these read GSRS…STPC, SPQS…QENT, PNST…QDSS, and PSSS…PSCS. 6 TECPR repeats span residues 945-976, 994-1027, 1179-1209, 1226-1259, 1279-1310, and 1322-1353; these read NVVW…KCDI, QTLW…WQVS, DALW…TRLD, QHIW…IMIE, QMLW…EHVP, and RTVW…KKIP. A disordered region spans residues 1388 to 1411; sequence HGTQKSSQAAMPHPEDLEDEWEVI.

Belongs to the WD repeat KIAA0329 family. Interacts with the ATG8 family members GABARAP, GABARAPL1, GABARAPL2, MAP1LC3B and MAP1LC3C. Detected in skin fibroblast (at protein level).

Functionally, probably plays a role as positive regulator of autophagy. This chain is Tectonin beta-propeller repeat-containing protein 2 (TECPR2), found in Homo sapiens (Human).